Consider the following 361-residue polypeptide: Molybdenum import ATP-binding protein ModC (361 aa).

Positions 1–235 (MDGLRLRFRR…VDLPLALDDD (235 aa)) constitute an ABC transporter domain. Residue 33–40 (GHSGSGKS) participates in ATP binding. Residues 296–361 (QSSILNRLPV…AQIKSVAVLA (66 aa)) enclose the Mop domain.

It belongs to the ABC transporter superfamily. Molybdate importer (TC 3.A.1.8) family. The complex is composed of two ATP-binding proteins (ModC), two transmembrane proteins (ModB) and a solute-binding protein (ModA).

The protein resides in the cell inner membrane. The enzyme catalyses molybdate(out) + ATP + H2O = molybdate(in) + ADP + phosphate + H(+). Part of the ABC transporter complex ModABC involved in molybdenum import. Responsible for energy coupling to the transport system. In Pseudomonas aeruginosa (strain ATCC 15692 / DSM 22644 / CIP 104116 / JCM 14847 / LMG 12228 / 1C / PRS 101 / PAO1), this protein is Molybdenum import ATP-binding protein ModC.